The primary structure comprises 64 residues: Beta-insect excitatory toxin OdTx12 (64 aa).

The LCN-type CS-alpha/beta domain maps to 1–59 (QSTGGKAPECLLSNYCNNECTKVHYADKGYCCLLSCYCFGLSDDKKVLEISDSRKKYCD). 4 cysteine pairs are disulfide-bonded: C10–C31, C16–C36, C20–C38, and C32–C58.

This sequence belongs to the long (4 C-C) scorpion toxin superfamily. Sodium channel inhibitor family. Beta subfamily. Expressed by the venom gland.

The protein localises to the secreted. Excitatory insect beta-toxins induce a spastic paralysis. They bind voltage-independently at site-4 of sodium channels (Nav) and shift the voltage of activation toward more negative potentials thereby affecting sodium channel activation and promoting spontaneous and repetitive firing. In vivo, this recombinant protein is lethal to Locusta migratoria larvae after injection, but has no significant effect when orally administered. Is not toxic to mice after intracerebroventricular injection. The sequence is that of Beta-insect excitatory toxin OdTx12 from Odontobuthus doriae (Yellow Iranian scorpion).